A 75-amino-acid chain; its full sequence is Exodeoxyribonuclease 7 small subunit (75 aa).

Belongs to the XseB family. Heterooligomer composed of large and small subunits.

The protein resides in the cytoplasm. It catalyses the reaction Exonucleolytic cleavage in either 5'- to 3'- or 3'- to 5'-direction to yield nucleoside 5'-phosphates.. In terms of biological role, bidirectionally degrades single-stranded DNA into large acid-insoluble oligonucleotides, which are then degraded further into small acid-soluble oligonucleotides. This is Exodeoxyribonuclease 7 small subunit from Caldanaerobacter subterraneus subsp. tengcongensis (strain DSM 15242 / JCM 11007 / NBRC 100824 / MB4) (Thermoanaerobacter tengcongensis).